Reading from the N-terminus, the 213-residue chain is Proton-translocating ferredoxin:NAD(+) oxidoreductase complex subunit E (213 aa).

The next 6 helical transmembrane spans lie at 11–31 (GLIAENPIFVLALSLCPALAT), 39–59 (FTMGICVLFVITCNNTVVSII), 69–89 (VPVYITCIATIVTVVELVMQA), 93–113 (LLYKQLGIYLALVVVFAIILA), 128–148 (FFDGLGMGCGFTLALTIIGMI), and 170–190 (ALIMILPPGGFILIGYLVAIV).

The protein belongs to the NqrDE/RnfAE family. In terms of assembly, the complex is composed of six subunits: RnfA, RnfB, RnfC, RnfD, RnfE and RnfG.

The protein localises to the cell membrane. Part of a membrane-bound complex that couples electron transfer with translocation of ions across the membrane. Couples electron transfer from reduced ferredoxin to NAD(+) with translocation of H(+) out of the cell. Essential for energy conservation during autotrophic growth. Contributes to ATP synthesis during heterotrophic growth. This is Proton-translocating ferredoxin:NAD(+) oxidoreductase complex subunit E from Clostridium ljungdahlii (strain ATCC 55383 / DSM 13528 / PETC).